A 491-amino-acid chain; its full sequence is Probable aspartyl aminopeptidase (491 aa).

Zn(2+) is bound at residue H90. H168 serves as a coordination point for substrate. Residue D278 participates in Zn(2+) binding. E315 lines the substrate pocket. Zn(2+) is bound by residues E316 and D361. D361, H364, K389, and Y396 together coordinate substrate. Residue H455 participates in Zn(2+) binding.

This sequence belongs to the peptidase M18 family. As to quaternary structure, tetrahedron-shaped homododecamer built from six homodimers. Zn(2+) is required as a cofactor.

The protein resides in the cytoplasm. It carries out the reaction Release of an N-terminal aspartate or glutamate from a peptide, with a preference for aspartate.. Likely to play an important role in intracellular protein and peptide metabolism. The polypeptide is Probable aspartyl aminopeptidase (Ricinus communis (Castor bean)).